The following is a 327-amino-acid chain: E3 ubiquitin ligase Rnf121 (327 aa).

5 helical membrane passes run 50–70 (MHAE…LLLV), 79–96 (SYNM…VYFT), 99–119 (LHWW…AFVT), 148–168 (ATGI…NLLF), and 173–193 (EDAM…GVLG). Residues 226–276 (CAVCGQQIFVDVNEEGIIENTYRLSCNHVFHEFCIRGWCIVGKKQTCPYCK) form an RING-type; atypical zinc finger.

This sequence belongs to the RNF121 family.

The protein localises to the endoplasmic reticulum membrane. It carries out the reaction S-ubiquitinyl-[E2 ubiquitin-conjugating enzyme]-L-cysteine + [acceptor protein]-L-lysine = [E2 ubiquitin-conjugating enzyme]-L-cysteine + N(6)-ubiquitinyl-[acceptor protein]-L-lysine.. Its pathway is protein modification; protein ubiquitination. E3 ubiquitin ligase which accepts ubiquitin and transfers it to substrates thereby promoting their degradation by the endoplasmic reticulum-associated degradation (ERAD) pathway which is a pathway involved in ubiquitin-dependent degradation of misfolded endoplasmic reticulum proteins. May regulate the unfolded protein response to reduce endoplasmic reticulum stress. The protein is E3 ubiquitin ligase Rnf121 (rnf121) of Xenopus tropicalis (Western clawed frog).